A 144-amino-acid polypeptide reads, in one-letter code: Putative pre-16S rRNA nuclease (144 aa).

Belongs to the YqgF nuclease family.

The protein localises to the cytoplasm. Its function is as follows. Could be a nuclease involved in processing of the 5'-end of pre-16S rRNA. This Pseudomonas aeruginosa (strain LESB58) protein is Putative pre-16S rRNA nuclease.